A 306-amino-acid polypeptide reads, in one-letter code: Tyrosine recombinase XerC (306 aa).

The region spanning 10-94 (ARCHSYLQQF…AVKQWGEFLL (85 aa)) is the Core-binding (CB) domain. Residues 115 to 294 (PLPKNIDVDS…DFQHLAKVYD (180 aa)) form the Tyr recombinase domain. Catalysis depends on residues Arg154, Lys178, His246, Arg249, and His272. The active-site O-(3'-phospho-DNA)-tyrosine intermediate is Tyr281.

The protein belongs to the 'phage' integrase family. XerC subfamily. Forms a cyclic heterotetrameric complex composed of two molecules of XerC and two molecules of XerD.

It localises to the cytoplasm. Functionally, site-specific tyrosine recombinase, which acts by catalyzing the cutting and rejoining of the recombining DNA molecules. The XerC-XerD complex is essential to convert dimers of the bacterial chromosome into monomers to permit their segregation at cell division. It also contributes to the segregational stability of plasmids. The chain is Tyrosine recombinase XerC from Shewanella oneidensis (strain ATCC 700550 / JCM 31522 / CIP 106686 / LMG 19005 / NCIMB 14063 / MR-1).